We begin with the raw amino-acid sequence, 65 residues long: Small ribosomal subunit protein uS10 (65 aa).

Belongs to the universal ribosomal protein uS10 family. In terms of assembly, part of the 30S ribosomal subunit.

Its function is as follows. Involved in the binding of tRNA to the ribosomes. This is Small ribosomal subunit protein uS10 (rps10) from Desulfurococcus mucosus (Desulfurococcus mobilis).